We begin with the raw amino-acid sequence, 675 residues long: TOM1-like protein 9 (675 aa).

The VHS domain maps to alanine 9–proline 138. Disordered regions lie at residues serine 144–phenylalanine 181, leucine 270–leucine 322, phenylalanine 371–methionine 524, glutamine 542–proline 561, and arginine 622–methionine 675. Positions glutamate 180–serine 268 constitute a GAT domain. Polar residues-rich tracts occupy residues glycine 299–leucine 317 and serine 372–valine 435. Residues serine 436 to serine 451 are compositionally biased toward low complexity. Polar residues-rich tracts occupy residues glutamine 470–proline 481 and proline 488–methionine 524. The span at asparagine 646 to lysine 661 shows a compositional bias: basic and acidic residues.

The protein belongs to the TOM1 family. In terms of assembly, interacts with ELC/VPS23A and ELCL/VPS23B. Ubiquitously expressed.

The protein localises to the cytoplasm. The protein resides in the membrane. Functionally, might contribute to the loading of the ESCRT machinery. The sequence is that of TOM1-like protein 9 from Arabidopsis thaliana (Mouse-ear cress).